Here is a 149-residue protein sequence, read N- to C-terminus: Golgi apparatus membrane protein tvp-18 (149 aa).

N11 carries N-linked (GlcNAc...) asparagine glycosylation. The next 4 membrane-spanning stretches (helical) occupy residues 18–38, 41–61, 84–103, and 108–128; these read WLGILSMILCFALGIANIFTF, IIIVFSVITLCFSFVILFVEV, NYTRAAAYGVMAVVVFLSCI, and SLLVPGIFLSFTGICYALAAL.

The protein belongs to the TVP18 family.

The protein resides in the golgi apparatus membrane. Functionally, golgi membrane protein involved in vesicular trafficking. This chain is Golgi apparatus membrane protein tvp-18 (tvp-18), found in Neurospora crassa (strain ATCC 24698 / 74-OR23-1A / CBS 708.71 / DSM 1257 / FGSC 987).